A 201-amino-acid polypeptide reads, in one-letter code: Probable DNA replication complex GINS protein PSF1 (201 aa).

This sequence belongs to the GINS1/PSF1 family. In terms of assembly, component of the GINS complex which is a heterotetramer of gins1, gins2, gins3 and gins4.

It is found in the nucleus. The GINS complex plays an essential role in the initiation of DNA replication. In Caenorhabditis briggsae, this protein is Probable DNA replication complex GINS protein PSF1.